A 334-amino-acid chain; its full sequence is S-adenosylmethionine decarboxylase proenzyme (334 aa).

Phe-7 contacts substrate. Residues Glu-8 and Glu-11 contribute to the active site. Glu-67 lines the substrate pocket. The active-site Schiff-base intermediate with substrate; via pyruvic acid is Ser-68. Residue Ser-68 is modified to Pyruvic acid (Ser); by autocatalysis. Cys-82 functions as the Proton donor; for catalytic activity in the catalytic mechanism. Residue Phe-223 participates in substrate binding. Residues Ser-229 and His-243 each act as proton acceptor; for processing activity in the active site. Glu-247 provides a ligand contact to substrate. Ser-298 carries the phosphoserine modification.

Belongs to the eukaryotic AdoMetDC family. As to quaternary structure, heterotetramer of two alpha and two beta chains. Requires pyruvate as cofactor. Is synthesized initially as an inactive proenzyme. Formation of the active enzyme involves a self-maturation process in which the active site pyruvoyl group is generated from an internal serine residue via an autocatalytic post-translational modification. Two non-identical subunits are generated from the proenzyme in this reaction, and the pyruvate is formed at the N-terminus of the alpha chain, which is derived from the carboxyl end of the proenzyme. The post-translation cleavage follows an unusual pathway, termed non-hydrolytic serinolysis, in which the side chain hydroxyl group of the serine supplies its oxygen atom to form the C-terminus of the beta chain, while the remainder of the serine residue undergoes an oxidative deamination to produce ammonia and the pyruvoyl group blocking the N-terminus of the alpha chain.

The catalysed reaction is S-adenosyl-L-methionine + H(+) = S-adenosyl 3-(methylsulfanyl)propylamine + CO2. It participates in amine and polyamine biosynthesis; S-adenosylmethioninamine biosynthesis; S-adenosylmethioninamine from S-adenosyl-L-methionine: step 1/1. In terms of biological role, essential for biosynthesis of the polyamines spermidine and spermine. Promotes maintenance and self-renewal of embryonic stem cells, by maintaining spermine levels. This chain is S-adenosylmethionine decarboxylase proenzyme (AMD1), found in Mesocricetus auratus (Golden hamster).